A 102-amino-acid chain; its full sequence is Small ribosomal subunit protein uS10 (102 aa).

It belongs to the universal ribosomal protein uS10 family. As to quaternary structure, part of the 30S ribosomal subunit.

Its function is as follows. Involved in the binding of tRNA to the ribosomes. The protein is Small ribosomal subunit protein uS10 of Methylocella silvestris (strain DSM 15510 / CIP 108128 / LMG 27833 / NCIMB 13906 / BL2).